The following is a 395-amino-acid chain: Altered inheritance of mitochondria protein 39, mitochondrial (395 aa).

Residues 156 to 176 (QIWSAIFGGIFGVILGYSLIY) traverse the membrane as a helical segment.

It belongs to the AIM39 family.

The protein localises to the mitochondrion membrane. This chain is Altered inheritance of mitochondria protein 39, mitochondrial (AIM39), found in Saccharomyces cerevisiae (strain RM11-1a) (Baker's yeast).